A 367-amino-acid polypeptide reads, in one-letter code: PR domain zinc finger protein 12 (367 aa).

The SET domain maps to 86–203; it reads AEVIIAQSSI…PDQELLVWYG (118 aa). 3 C2H2-type zinc fingers span residues 243-265, 271-293, and 299-323; these read MRCV…MRIH, FVCR…VRLH, and YKCQ…SARH. Residues 318-337 form a disordered region; it reads QKSARHRPPSTALQAHSPAL.

The protein belongs to the class V-like SAM-binding methyltransferase superfamily. Interacts with EHMT2. In terms of tissue distribution, not found in adult tissues except in dorsal root ganglia.

It localises to the nucleus. In terms of biological role, transcriptional regulator necessary for the development of nociceptive neurons, playing a key role in determining the nociceptive lineage from neural crest cell progenitors. Initiates neurogenesis and activates downstream pro-neuronal transcription factors, such as NEUROD1, BRN3A, and ISL1, specifically within nociceptive neurons, while repressing non-nociceptor cell fates. Essential for the proper function of nociceptors in adults, influencing both their excitability and their gene expression, thereby impacting how these neurons respond to various pain stimuli. This chain is PR domain zinc finger protein 12 (PRDM12), found in Homo sapiens (Human).